The sequence spans 309 residues: UDP-N-acetylenolpyruvoylglucosamine reductase (309 aa).

Positions 34–221 (RVGGPAQVLF…TAAREAAQPI (188 aa)) constitute an FAD-binding PCMH-type domain. Arg-179 is a catalytic residue. Ser-228 serves as the catalytic Proton donor. Residue Glu-298 is part of the active site.

The protein belongs to the MurB family. FAD serves as cofactor.

The protein resides in the cytoplasm. The catalysed reaction is UDP-N-acetyl-alpha-D-muramate + NADP(+) = UDP-N-acetyl-3-O-(1-carboxyvinyl)-alpha-D-glucosamine + NADPH + H(+). Its pathway is cell wall biogenesis; peptidoglycan biosynthesis. Cell wall formation. The chain is UDP-N-acetylenolpyruvoylglucosamine reductase from Methylorubrum extorquens (strain PA1) (Methylobacterium extorquens).